A 121-amino-acid chain; its full sequence is Phosphoribosyl-ATP pyrophosphatase (121 aa).

Belongs to the PRA-PH family.

Its subcellular location is the cytoplasm. It catalyses the reaction 1-(5-phospho-beta-D-ribosyl)-ATP + H2O = 1-(5-phospho-beta-D-ribosyl)-5'-AMP + diphosphate + H(+). It participates in amino-acid biosynthesis; L-histidine biosynthesis; L-histidine from 5-phospho-alpha-D-ribose 1-diphosphate: step 2/9. This is Phosphoribosyl-ATP pyrophosphatase from Burkholderia cenocepacia (strain ATCC BAA-245 / DSM 16553 / LMG 16656 / NCTC 13227 / J2315 / CF5610) (Burkholderia cepacia (strain J2315)).